A 200-amino-acid polypeptide reads, in one-letter code: Holliday junction resolvase RecU (200 aa).

The interval 1–25 is disordered; sequence MTIRYPNGKRYNQASQPQKTPIKTH. The segment covering 10–25 has biased composition (polar residues); sequence RYNQASQPQKTPIKTH. Mg(2+) is bound by residues T85, D87, E100, and Q119.

Belongs to the RecU family. Requires Mg(2+) as cofactor.

It is found in the cytoplasm. It carries out the reaction Endonucleolytic cleavage at a junction such as a reciprocal single-stranded crossover between two homologous DNA duplexes (Holliday junction).. In terms of biological role, endonuclease that resolves Holliday junction intermediates in genetic recombination. Cleaves mobile four-strand junctions by introducing symmetrical nicks in paired strands. Promotes annealing of linear ssDNA with homologous dsDNA. Required for DNA repair, homologous recombination and chromosome segregation. The sequence is that of Holliday junction resolvase RecU from Bacillus cereus (strain G9842).